The following is a 142-amino-acid chain: Small heat shock protein IbpB (142 aa).

In terms of domain architecture, sHSP spans 26–137; that stretch reads AGESQSFPPY…APQRIAISER (112 aa).

It belongs to the small heat shock protein (HSP20) family. As to quaternary structure, homodimer. Forms homomultimers of about 100-150 subunits at optimal growth temperatures. Conformation changes to oligomers at high temperatures or high ionic concentrations. The decrease in size of the multimers is accompanied by an increase in chaperone activity.

It is found in the cytoplasm. Its function is as follows. Associates with aggregated proteins, together with IbpA, to stabilize and protect them from irreversible denaturation and extensive proteolysis during heat shock and oxidative stress. Aggregated proteins bound to the IbpAB complex are more efficiently refolded and reactivated by the ATP-dependent chaperone systems ClpB and DnaK/DnaJ/GrpE. Its activity is ATP-independent. In Klebsiella pneumoniae (strain 342), this protein is Small heat shock protein IbpB.